The primary structure comprises 194 residues: GTP cyclohydrolase 1 (194 aa).

Residues Cys83, His86, and Cys155 each contribute to the Zn(2+) site.

Belongs to the GTP cyclohydrolase I family. As to quaternary structure, toroid-shaped homodecamer, composed of two pentamers of five dimers.

It catalyses the reaction GTP + H2O = 7,8-dihydroneopterin 3'-triphosphate + formate + H(+). It functions in the pathway cofactor biosynthesis; 7,8-dihydroneopterin triphosphate biosynthesis; 7,8-dihydroneopterin triphosphate from GTP: step 1/1. The chain is GTP cyclohydrolase 1 (folE) from Streptococcus pyogenes serotype M1.